Reading from the N-terminus, the 826-residue chain is Lysine-specific histone demethylase 1B (826 aa).

Over residues 1-11 (MAASRGRSKKR) the composition is skewed to basic residues. Residues 1–46 (MAASRGRSKKRSNLELSPDNLPLRSSGRQAKKKAVEIPDEDEDGSS) are disordered. Phosphoserine is present on residues serine 17 and serine 26. Zn(2+)-binding residues include cysteine 53, cysteine 58, cysteine 65, cysteine 73, histidine 84, histidine 90, cysteine 92, cysteine 95, cysteine 142, cysteine 147, cysteine 169, and cysteine 185. The CW-type zinc finger occupies 133–193 (DQQLPYWVQC…HCSFPEDLRV (61 aa)). Phosphoserine is present on serine 253. The tract at residues 279–298 (YQPNECGKALCVRPDVMELD) is GLYR1-binding. Residues 281 to 379 (PNECGKALCV…TGVLTVAAGQ (99 aa)) enclose the SWIRM domain. 389–445 (KSVLVVGAGPAGLAAARQLHNFGMKVTVLEAKDRIGGRVWDDKSFKGVVVGRGPQIV) contributes to the FAD binding site. 3 histone H3-binding regions span residues 444-473 (IVNG…RCDL), 493-504 (FNALLDVVSEWR), and 544-578 (FHLS…AGDH). A GLYR1-binding region spans residues 570–572 (FFA). FAD-binding positions include valine 604, glutamate 799, and 807-809 (QTV). The segment at 802–818 (NRHFPQTVTGAYLSGVR) is GLYR1-binding.

This sequence belongs to the flavin monoamine oxidase family. Interacts with its cofactor GLYR1 at nucleosomes; this interaction stimulates H3K4me1 and H3K4me2 demethylation. In contrast to KDM1A, does not form a complex with RCOR1/CoREST. Possible accessory component of the polycomb repressive deubiquitinase (PR-DUB) complex, at least composed of BAP1, one of ASXL1, ASXL2 or (probably) ASXL3 and one of MBD5 or MBD6. The PR-DUB core associates with a number of accessory proteins, including FOXK1, FOXK2, KDM1B, HCFC1 and OGT; KDM1B specifically associates with ASXL2 PR-DUB complexes. FAD serves as cofactor. Requires Zn(2+) as cofactor. Expressed in growing oocytes and in intestinal gland.

It localises to the nucleus. The protein localises to the chromosome. The enzyme catalyses N(6),N(6)-dimethyl-L-lysyl(4)-[histone H3] + 2 A + 2 H2O = L-lysyl(4)-[histone H3] + 2 formaldehyde + 2 AH2. It catalyses the reaction N(6)-methyl-L-lysyl(4)-[histone H3] + A + H2O = L-lysyl(4)-[histone H3] + formaldehyde + AH2. With respect to regulation, inhibited by tranylcypromine, but not by pargyline, deprenyl or rasagiline. Histone H3K4me1 and H3K4me2 demethylase activity is inhibited by DNA, this inhibition is released in complex with GLYR1. Functionally, histone demethylase that demethylates 'Lys-4' of histone H3, a specific tag for epigenetic transcriptional activation, thereby acting as a corepressor. Required for de novo DNA methylation of a subset of imprinted genes during oogenesis. Acts by oxidizing the substrate by FAD to generate the corresponding imine that is subsequently hydrolyzed. Demethylates both mono- and di-methylated 'Lys-4' of histone H3. Has no effect on tri-methylated 'Lys-4', mono-, di- or tri-methylated 'Lys-9', mono-, di- or tri-methylated 'Lys-27', mono-, di- or tri-methylated 'Lys-36' of histone H3, or on mono-, di- or tri-methylated 'Lys-20' of histone H4. In terms of biological role, histone demethylase that demethylates 'Lys-4' of histone H3, a specific tag for epigenetic transcriptional activation, thereby acting as a corepressor. Required for de novo DNA methylation of a subset of imprinted genes during oogenesis. Acts by oxidizing the substrate by FAD to generate the corresponding imine that is subsequently hydrolyzed. Demethylates both mono- and di-methylated 'Lys-4' of histone H3. Has no effect on tri-methylated 'Lys-4', mono-, di- or tri-methylated 'Lys-9', mono-, di- or tri-methylated 'Lys-27', mono-, di- or tri-methylated 'Lys-36' of histone H3, or on mono-, di- or tri-methylated 'Lys-20' of histone H4. Alone, it is unable to demethylate H3K4me on nucleosomes and requires the presence of GLYR1 to achieve such activity, they form a multifunctional enzyme complex that modifies transcribed chromatin and facilitates Pol II transcription through nucleosomes. The polypeptide is Lysine-specific histone demethylase 1B (Mus musculus (Mouse)).